A 122-amino-acid chain; its full sequence is Small ribosomal subunit protein bS6 (122 aa).

The protein belongs to the bacterial ribosomal protein bS6 family.

In terms of biological role, binds together with bS18 to 16S ribosomal RNA. The protein is Small ribosomal subunit protein bS6 of Methylibium petroleiphilum (strain ATCC BAA-1232 / LMG 22953 / PM1).